A 277-amino-acid chain; its full sequence is Shikimate dehydrogenase (NADP(+)) (277 aa).

Residues 15–17 and Thr-62 contribute to the shikimate site; that span reads SLS. Lys-66 acts as the Proton acceptor in catalysis. Positions 87 and 102 each coordinate shikimate. Residues 127-131, 151-156, and Ile-219 each bind NADP(+); these read GAGGA and NRTVDK. Tyr-221 is a shikimate binding site. Gly-242 is a binding site for NADP(+).

This sequence belongs to the shikimate dehydrogenase family. Homodimer.

It catalyses the reaction shikimate + NADP(+) = 3-dehydroshikimate + NADPH + H(+). It functions in the pathway metabolic intermediate biosynthesis; chorismate biosynthesis; chorismate from D-erythrose 4-phosphate and phosphoenolpyruvate: step 4/7. In terms of biological role, involved in the biosynthesis of the chorismate, which leads to the biosynthesis of aromatic amino acids. Catalyzes the reversible NADPH linked reduction of 3-dehydroshikimate (DHSA) to yield shikimate (SA). This chain is Shikimate dehydrogenase (NADP(+)), found in Bacillus anthracis (strain CDC 684 / NRRL 3495).